The sequence spans 699 residues: Protein phosphatase 1 regulatory subunit 37 (699 aa).

Residues 1–12 (MEIPPQEAPPGP) are compositionally biased toward pro residues. Positions 1-42 (MEIPPQEAPPGPGADGEAEEAPVEAPSPGPASPPADGRLKAA) are disordered. Ser-50 and Ser-56 each carry phosphoserine. LRR repeat units follow at residues 220–240 (SLAVLHLESSSLSGRPLMLLA), 248–269 (TLRELYLADNKLNGLQDSAQLG), 277–297 (SLQILDLRNNHVLDSGLAYIC), 306–326 (GLATLVLWNNQLTHTGMAFLG), and 334–354 (SLETLNLGHNPIGNEGVRNLK). A disordered region spans residues 467–667 (RLQLSASMPE…PPGPEAKVGS (201 aa)). Acidic residues predominate over residues 510–525 (SDSDSDSEGEDRDEAD). Ser-566 is modified (phosphoserine). Composition is skewed to pro residues over residues 588 to 613 (PPVPPAPPGPVSPPASASPPTSPFPT) and 622 to 642 (DPGPPEPQPPLEPPQVGPPLP).

Belongs to the PPP1R37 family. As to quaternary structure, interacts with PPP1CA.

Inhibits phosphatase activity of protein phosphatase 1 (PP1) complexes. The polypeptide is Protein phosphatase 1 regulatory subunit 37 (PPP1R37) (Bos taurus (Bovine)).